We begin with the raw amino-acid sequence, 101 residues long: Urease subunit gamma (101 aa).

The protein belongs to the urease gamma subunit family. As to quaternary structure, heterotrimer of UreA (gamma), UreB (beta) and UreC (alpha) subunits. Three heterotrimers associate to form the active enzyme.

It localises to the cytoplasm. It carries out the reaction urea + 2 H2O + H(+) = hydrogencarbonate + 2 NH4(+). The protein operates within nitrogen metabolism; urea degradation; CO(2) and NH(3) from urea (urease route): step 1/1. The sequence is that of Urease subunit gamma from Ureaplasma parvum serovar 3 (strain ATCC 27815 / 27 / NCTC 11736).